The primary structure comprises 594 residues: TOX high mobility group box family member 4-B (594 aa).

2 disordered regions span residues 160–225 and 522–545; these read GTIL…PQKP and ESPPPQMDVELVSSSPPPSLSPQC. Positions 207-217 are enriched in basic residues; it reads KPKTPKKKKKK. The short motif at 212–217 is the Nuclear localization signal element; sequence KKKKKK. The HMG box DNA-binding region spans 222-290; the sequence is PQKPLSAYAL…EYLKALALYK (69 aa).

As to quaternary structure, component of the PNUTS-PP1 phosphatase complex.

It is found in the nucleus. It localises to the chromosome. In terms of biological role, transcription factor that modulates cell fate reprogramming from the somatic state to the pluripotent and neuronal fate. Also acts as a regulatory component of protein phosphatase 1 (PP1) complexes. Component of the PNUTS-PP1 protein phosphatase complex, a PP1 complex that regulates RNA polymerase II transcription pause-release. PNUTS-PP1 also plays a role in the control of chromatin structure and cell cycle progression during the transition from mitosis into interphase. The protein is TOX high mobility group box family member 4-B (tox4-b) of Xenopus laevis (African clawed frog).